The sequence spans 471 residues: 3-isopropylmalate dehydratase large subunit (471 aa).

[4Fe-4S] cluster contacts are provided by cysteine 347, cysteine 407, and cysteine 410.

Belongs to the aconitase/IPM isomerase family. LeuC type 1 subfamily. Heterodimer of LeuC and LeuD. [4Fe-4S] cluster is required as a cofactor.

The catalysed reaction is (2R,3S)-3-isopropylmalate = (2S)-2-isopropylmalate. Its pathway is amino-acid biosynthesis; L-leucine biosynthesis; L-leucine from 3-methyl-2-oxobutanoate: step 2/4. Its function is as follows. Catalyzes the isomerization between 2-isopropylmalate and 3-isopropylmalate, via the formation of 2-isopropylmaleate. This Vibrio parahaemolyticus serotype O3:K6 (strain RIMD 2210633) protein is 3-isopropylmalate dehydratase large subunit.